A 345-amino-acid chain; its full sequence is Probable S-adenosylmethionine carrier 2, chloroplastic (345 aa).

Residues 1 to 31 constitute a chloroplast transit peptide; that stretch reads MTKALSGFCCSLSLSTLVRSSSSHMDSDIVS. Solcar repeat units lie at residues 76–148, 157–239, and 252–334; these read RVLY…TKQK, LSAV…LRIG, and ENAM…TKQI. Transmembrane regions (helical) follow at residues 82–102, 121–141, 156–176, 254–274, and 309–329; these read LITGGLAGVVVEAALYPIDTI, YSGLGGNLVGVLPASALFFGV, NLSAVAHLAAGALGGAVSSIV, AMIGAFAGAVTGVLTTPLDVI, and GMGPRVLWIGIGGSIFFGVLE.

It belongs to the mitochondrial carrier (TC 2.A.29) family. In terms of tissue distribution, expressed at low levels in seedlings, leaves, flowers, stems and roots.

It localises to the plastid. Its subcellular location is the chloroplast membrane. In terms of biological role, probable S-adenosylmethionine (SAM) transporter able to catalyze both uniport and exchange reactions through membranes. The sequence is that of Probable S-adenosylmethionine carrier 2, chloroplastic (SAMC2) from Arabidopsis thaliana (Mouse-ear cress).